The primary structure comprises 306 residues: Metal ABC transporter substrate-binding lipoprotein SloC (306 aa).

The N-terminal stretch at 1–19 (MKKLSLLLLVCLSLLGLFA) is a signal peptide. Cys20 is lipidated: N-palmitoyl cysteine. A lipid anchor (S-diacylglycerol cysteine) is attached at Cys20. Positions 64, 136, 202, and 277 each coordinate a divalent metal cation.

It belongs to the bacterial solute-binding protein 9 family. Lipoprotein receptor antigen (Lrai) subfamily.

The protein resides in the cell membrane. Part of the ATP-binding cassette (ABC) transport system SloABC involved in metal import. Binds a metal with high affinity and specificity and delivers it to the membrane permease for translocation into the cytoplasm. May act as an adhesin which is involved on adherence to extracellular matrix. It is an important factor in pathogenesis and infection. May contribute to the formation and accumulation of dental plaque. The chain is Metal ABC transporter substrate-binding lipoprotein SloC (sloC) from Streptococcus mutans serotype c (strain ATCC 700610 / UA159).